Here is a 457-residue protein sequence, read N- to C-terminus: Zinc finger protein ZPR1 (457 aa).

Over residues 1 to 13 (MSTVSDPNSSNPP) the composition is skewed to polar residues. Positions 1 to 21 (MSTVSDPNSSNPPESAGNIRP) are disordered. 2 C4-type zinc fingers span residues 43 to 75 (CMNC…CDHC) and 261 to 293 (CPSC…CGAC). A disordered region spans residues 414 to 457 (VQSLSDDDSEPDDKLTVERYDRSYEDNEDLGLNDMKTEGYEEKA). 2 stretches are compositionally biased toward basic and acidic residues: residues 425-438 (DDKL…RSYE) and 448-457 (MKTEGYEEKA).

The protein belongs to the ZPR1 family.

Functionally, might mediate EGFR and FGFR signal transduction cascades required for lumen formation in tracheal cells. This Drosophila melanogaster (Fruit fly) protein is Zinc finger protein ZPR1.